A 295-amino-acid polypeptide reads, in one-letter code: 4-diphosphocytidyl-2-C-methyl-D-erythritol kinase (295 aa).

Lysine 25 is a catalytic residue. Residue 108–118 coordinates ATP; that stretch reads PMGSGLGGGSS. Aspartate 150 is an active-site residue.

Belongs to the GHMP kinase family. IspE subfamily.

The catalysed reaction is 4-CDP-2-C-methyl-D-erythritol + ATP = 4-CDP-2-C-methyl-D-erythritol 2-phosphate + ADP + H(+). Its pathway is isoprenoid biosynthesis; isopentenyl diphosphate biosynthesis via DXP pathway; isopentenyl diphosphate from 1-deoxy-D-xylulose 5-phosphate: step 3/6. Its function is as follows. Catalyzes the phosphorylation of the position 2 hydroxy group of 4-diphosphocytidyl-2C-methyl-D-erythritol. This is 4-diphosphocytidyl-2-C-methyl-D-erythritol kinase from Pasteurella multocida (strain Pm70).